Consider the following 174-residue polypeptide: MDITIHNPLIRRPLFSWLAPSRIFDQIFGEHLQESELLPASPSLSPFLMRSPIFRMPSWLETGLSEMRLEKDKFSVNLDVKHFSPEELKVKVLGDMVEIHGKHEERQDEHGFIAREFNRKYRIPADVDPLTITSSLSLDGVLTVSAPRKQSDVPERSIPITREEKPAIAGAQRK.

N-acetylmethionine is present on M1. One can recognise a sHSP domain in the interval 55 to 163 (RMPSWLETGL…PERSIPITRE (109 aa)). Residues H82, H103, E105, and H110 each coordinate Zn(2+). Residues 148–174 (RKQSDVPERSIPITREEKPAIAGAQRK) are disordered. Positions 149 to 166 (KQSDVPERSIPITREEKP) are enriched in basic and acidic residues.

This sequence belongs to the small heat shock protein (HSP20) family. Heteromer composed of three CRYAA and one CRYAB subunits. Aggregates with homologous proteins, including the small heat shock protein HSPB1, to form large heteromeric complexes. Inter-subunit bridging via zinc ions enhances stability, which is crucial as there is no protein turn over in the lens. In terms of tissue distribution, lens as well as other tissues.

In terms of biological role, may contribute to the transparency and refractive index of the lens. This is Alpha-crystallin B chain (CRYAB) from Anas platyrhynchos (Mallard).